The chain runs to 607 residues: Elongation factor 4 (607 aa).

The 183-residue stretch at 11–193 folds into the tr-type G domain; it reads ENIRNFSIIA…KIVEVVPAPD (183 aa). Residues 23–28 and 140–143 contribute to the GTP site; these read DHGKST and NKID.

This sequence belongs to the TRAFAC class translation factor GTPase superfamily. Classic translation factor GTPase family. LepA subfamily.

It is found in the cell membrane. The enzyme catalyses GTP + H2O = GDP + phosphate + H(+). Functionally, required for accurate and efficient protein synthesis under certain stress conditions. May act as a fidelity factor of the translation reaction, by catalyzing a one-codon backward translocation of tRNAs on improperly translocated ribosomes. Back-translocation proceeds from a post-translocation (POST) complex to a pre-translocation (PRE) complex, thus giving elongation factor G a second chance to translocate the tRNAs correctly. Binds to ribosomes in a GTP-dependent manner. In Staphylococcus aureus (strain USA300), this protein is Elongation factor 4.